Here is a 149-residue protein sequence, read N- to C-terminus: MLHTTIILLVIALLSLVAKDLVLVYASLLLLGLSLLKAVPVMDAIQKPMFHVGLFCLMVFLLIPIAKGKYDFISLGKEMVSWKATIAILAGFIISYVGGKGLSILPDQPVVFIGVTIGTLLAVLLSNGLPAGLIIAAGCIALLSRIFNF.

4 consecutive transmembrane segments (helical) span residues 6-26 (IILLVIALLSLVAKDLVLVYA), 48-68 (PMFHVGLFCLMVFLLIPIAKG), 86-106 (IAILAGFIISYVGGKGLSILP), and 120-140 (LLAVLLSNGLPAGLIIAAGCI).

Belongs to the UPF0756 family.

It is found in the cell membrane. This is UPF0756 membrane protein BBR47_12340 from Brevibacillus brevis (strain 47 / JCM 6285 / NBRC 100599).